The sequence spans 655 residues: Cyclomaltodextrin glucanotransferase (655 aa).

The first 30 residues, 1–30 (MKRNRFFNTSAAIAISIALNTFFCSMQTIA), serve as a signal peptide directing secretion. Ca(2+)-binding residues include Asp-55, Asn-60, Asn-61, Gly-79, and Asp-81. Substrate is bound at residue 123-124 (YW). A Ca(2+)-binding site is contributed by Asn-164. Substrate contacts are provided by residues His-165 and 217–220 (NLFN). Asp-223 is a binding site for Ca(2+). Arg-251 is a substrate binding site. Asp-253 functions as the Nucleophile in the catalytic mechanism. 256–257 (KH) lines the substrate pocket. His-257 serves as a coordination point for Ca(2+). The Proton donor role is filled by Glu-287. Residues His-362, Asp-436, and Arg-440 each contribute to the substrate site. Residues 554 to 655 (AENPTVQSIN…NDTQTTNGSF (102 aa)) enclose the CBM20 domain. The interval 630–655 (TANVEWQSGANNQFNSNDTQTTNGSF) is disordered.

The protein belongs to the glycosyl hydrolase 13 family. As to quaternary structure, monomer. The cofactor is Ca(2+).

The catalysed reaction is Cyclizes part of a (1-&gt;4)-alpha-D-glucan chain by formation of a (1-&gt;4)-alpha-D-glucosidic bond.. This Klebsiella oxytoca protein is Cyclomaltodextrin glucanotransferase (cgt).